A 432-amino-acid polypeptide reads, in one-letter code: Testis-specific Y-encoded-like protein 1 (432 aa).

3 disordered regions span residues 1 to 31 (MSGR…PDPS), 54 to 110 (ALPP…LETA), and 116 to 135 (TDDS…LSRE). A Glycyl lysine isopeptide (Lys-Gly) (interchain with G-Cter in SUMO2) cross-link involves residue Lys160.

This sequence belongs to the nucleosome assembly protein (NAP) family. Post-translationally, ubiquitinated by the CRL2(APPBP2) complex, which recognizes the Arg-Xaa-Xaa-Gly sequence at the C-terminus, leading to its degradation.

It localises to the nucleus. Its subcellular location is the nucleolus. The chain is Testis-specific Y-encoded-like protein 1 (TSPYL1) from Bos taurus (Bovine).